Consider the following 200-residue polypeptide: Recombination protein RecR (200 aa).

Residues 57 to 72 (CQHCRTFTENSLCDIC) form a C4-type zinc finger. The region spanning 81 to 176 (GQLCIVETPA…NITRIAHGVP (96 aa)) is the Toprim domain.

This sequence belongs to the RecR family.

Functionally, may play a role in DNA repair. It seems to be involved in an RecBC-independent recombinational process of DNA repair. It may act with RecF and RecO. The sequence is that of Recombination protein RecR from Tolumonas auensis (strain DSM 9187 / NBRC 110442 / TA 4).